The sequence spans 257 residues: Phosphate import ATP-binding protein PstB (257 aa).

Residues 11 to 252 (IQVRNLNFYY…PAKKQTEDYI (242 aa)) form the ABC transporter domain. An ATP-binding site is contributed by 43–50 (GPSGCGKS).

It belongs to the ABC transporter superfamily. Phosphate importer (TC 3.A.1.7) family. As to quaternary structure, the complex is composed of two ATP-binding proteins (PstB), two transmembrane proteins (PstC and PstA) and a solute-binding protein (PstS).

It localises to the cell inner membrane. It catalyses the reaction phosphate(out) + ATP + H2O = ADP + 2 phosphate(in) + H(+). In terms of biological role, part of the ABC transporter complex PstSACB involved in phosphate import. Responsible for energy coupling to the transport system. This Escherichia coli O6:K15:H31 (strain 536 / UPEC) protein is Phosphate import ATP-binding protein PstB.